The following is a 463-amino-acid chain: Cysteine--tRNA ligase (463 aa).

C33 is a Zn(2+) binding site. Residues 35-45 carry the 'HIGH' region motif; sequence PTVYDFAHIGN. 3 residues coordinate Zn(2+): C221, H246, and E250. Residues 279 to 283 carry the 'KMSKS' region motif; that stretch reads KMSKS. K282 lines the ATP pocket.

The protein belongs to the class-I aminoacyl-tRNA synthetase family. In terms of assembly, monomer. It depends on Zn(2+) as a cofactor.

The protein resides in the cytoplasm. The catalysed reaction is tRNA(Cys) + L-cysteine + ATP = L-cysteinyl-tRNA(Cys) + AMP + diphosphate. The polypeptide is Cysteine--tRNA ligase (Rhizobium leguminosarum bv. trifolii (strain WSM2304)).